Consider the following 338-residue polypeptide: L-serine dehydratase (338 aa).

An N6-(pyridoxal phosphate)lysine modification is found at Lys-39.

It belongs to the serine/threonine dehydratase family. The cofactor is pyridoxal 5'-phosphate.

The protein resides in the cytoplasm. It catalyses the reaction L-serine = pyruvate + NH4(+). Its pathway is carbohydrate biosynthesis; gluconeogenesis. This Saccharomyces cerevisiae (Baker's yeast) protein is L-serine dehydratase (SDL1).